The primary structure comprises 104 residues: Secreted RxLR effector protein 54 (104 aa).

The signal sequence occupies residues 1 to 19 (MIFTLLGLALVATKSACIA). The RxLR motif lies at 52 to 55 (RSLR). Residue Asn-64 is glycosylated (N-linked (GlcNAc...) asparagine).

The protein belongs to the RxLR effector family.

The protein resides in the secreted. It localises to the host chloroplast envelope. Its subcellular location is the host mitochondrion. The protein localises to the host nucleus. It is found in the host cytoplasm. In terms of biological role, secreted effector that completely suppresses the host cell death induced by cell death-inducing proteins. The chain is Secreted RxLR effector protein 54 from Plasmopara viticola (Downy mildew of grapevine).